A 346-amino-acid polypeptide reads, in one-letter code: DNA primase small subunit PriS (346 aa).

Catalysis depends on residues Asp95 and Asp97. Residues Cys106, His108, Cys114, and Cys117 each contribute to the Zn(2+) site. The short motif at 106–117 (CEHEPGTVCPIC) is the Zinc knuckle motif element. Asp280 is an active-site residue.

This sequence belongs to the eukaryotic-type primase small subunit family. As to quaternary structure, heterodimer of a small subunit (PriS) and a large subunit (PriL). It depends on Mg(2+) as a cofactor. The cofactor is Mn(2+).

Catalytic subunit of DNA primase, an RNA polymerase that catalyzes the synthesis of short RNA molecules used as primers for DNA polymerase during DNA replication. The small subunit contains the primase catalytic core and has DNA synthesis activity on its own. Binding to the large subunit stabilizes and modulates the activity, increasing the rate of DNA synthesis while decreasing the length of the DNA fragments, and conferring RNA synthesis capability. The DNA polymerase activity may enable DNA primase to also catalyze primer extension after primer synthesis. May also play a role in DNA repair. The protein is DNA primase small subunit PriS of Pyrococcus horikoshii (strain ATCC 700860 / DSM 12428 / JCM 9974 / NBRC 100139 / OT-3).